We begin with the raw amino-acid sequence, 616 residues long: Dihydroxy-acid dehydratase (616 aa).

Aspartate 81 serves as a coordination point for Mg(2+). Cysteine 122 contributes to the [2Fe-2S] cluster binding site. The Mg(2+) site is built by aspartate 123 and lysine 124. Lysine 124 is subject to N6-carboxylysine. Cysteine 195 contacts [2Fe-2S] cluster. Residue glutamate 491 coordinates Mg(2+). The active-site Proton acceptor is the serine 517.

It belongs to the IlvD/Edd family. Homodimer. Requires [2Fe-2S] cluster as cofactor. The cofactor is Mg(2+).

It carries out the reaction (2R)-2,3-dihydroxy-3-methylbutanoate = 3-methyl-2-oxobutanoate + H2O. The catalysed reaction is (2R,3R)-2,3-dihydroxy-3-methylpentanoate = (S)-3-methyl-2-oxopentanoate + H2O. Its pathway is amino-acid biosynthesis; L-isoleucine biosynthesis; L-isoleucine from 2-oxobutanoate: step 3/4. It functions in the pathway amino-acid biosynthesis; L-valine biosynthesis; L-valine from pyruvate: step 3/4. Functions in the biosynthesis of branched-chain amino acids. Catalyzes the dehydration of (2R,3R)-2,3-dihydroxy-3-methylpentanoate (2,3-dihydroxy-3-methylvalerate) into 2-oxo-3-methylpentanoate (2-oxo-3-methylvalerate) and of (2R)-2,3-dihydroxy-3-methylbutanoate (2,3-dihydroxyisovalerate) into 2-oxo-3-methylbutanoate (2-oxoisovalerate), the penultimate precursor to L-isoleucine and L-valine, respectively. This Yersinia pseudotuberculosis serotype O:3 (strain YPIII) protein is Dihydroxy-acid dehydratase.